A 634-amino-acid polypeptide reads, in one-letter code: Probable potassium transport system protein Kup 2 (634 aa).

The next 12 membrane-spanning stretches (helical) occupy residues 20–40 (FWTL…TSPL), 64–84 (VLSL…VLLI), 110–130 (FAAI…DAII), 148–168 (PGFD…LFLV), 174–194 (AAVA…MAVA), 224–244 (AGLL…ALYA), 258–278 (WLVL…AMLL), 290–310 (LLFP…ATII), 348–368 (IYIP…VFAF), 377–397 (AYGI…FFVM), 405–425 (AAVA…FLMA), and 430–450 (IVDG…VMVT).

The protein belongs to the HAK/KUP transporter (TC 2.A.72) family.

It localises to the cell inner membrane. The catalysed reaction is K(+)(in) + H(+)(in) = K(+)(out) + H(+)(out). In terms of biological role, transport of potassium into the cell. Likely operates as a K(+):H(+) symporter. The sequence is that of Probable potassium transport system protein Kup 2 from Rhodopseudomonas palustris (strain ATCC BAA-98 / CGA009).